Consider the following 239-residue polypeptide: Tetrahydromethanopterin S-methyltransferase subunit A (239 aa).

Residues 1-215 (MANKKSPAAT…EAAMIAKFNS (215 aa)) lie on the Cytoplasmic side of the membrane. H85 contributes to the 5-hydroxybenzimidazolylcob(I)amide binding site. A helical membrane pass occupies residues 216 to 238 (GYYNGKIQGIAIGLFLSILVFSL). A topological domain (extracellular) is located at residue L239.

It belongs to the MtrA family. The complex is composed of 8 subunits; MtrA, MtrB, MtrC, MtrD, MtrE, MtrF, MtrG and MtrH. 5-hydroxybenzimidazolylcob(I)amide is required as a cofactor.

The protein resides in the cell membrane. The enzyme catalyses 5-methyl-5,6,7,8-tetrahydromethanopterin + coenzyme M + 2 Na(+)(in) = 5,6,7,8-tetrahydromethanopterin + methyl-coenzyme M + 2 Na(+)(out). It participates in one-carbon metabolism; methanogenesis from CO(2); methyl-coenzyme M from 5,10-methylene-5,6,7,8-tetrahydromethanopterin: step 2/2. Functionally, part of a complex that catalyzes the formation of methyl-coenzyme M and tetrahydromethanopterin from coenzyme M and methyl-tetrahydromethanopterin. This is an energy-conserving, sodium-ion translocating step. In Methanococcus maripaludis (strain C7 / ATCC BAA-1331), this protein is Tetrahydromethanopterin S-methyltransferase subunit A.